The following is a 282-amino-acid chain: Probable endonuclease 4 (282 aa).

Zn(2+)-binding residues include histidine 69, histidine 109, glutamate 145, aspartate 179, histidine 182, histidine 216, aspartate 229, histidine 231, and glutamate 261.

This sequence belongs to the AP endonuclease 2 family. Requires Zn(2+) as cofactor.

It carries out the reaction Endonucleolytic cleavage to 5'-phosphooligonucleotide end-products.. In terms of biological role, endonuclease IV plays a role in DNA repair. It cleaves phosphodiester bonds at apurinic or apyrimidinic (AP) sites, generating a 3'-hydroxyl group and a 5'-terminal sugar phosphate. This Campylobacter hominis (strain ATCC BAA-381 / DSM 21671 / CCUG 45161 / LMG 19568 / NCTC 13146 / CH001A) protein is Probable endonuclease 4.